A 287-amino-acid polypeptide reads, in one-letter code: Movement protein BC1 (287 aa).

Belongs to the begomovirus movement protein BC1 family. As to quaternary structure, binds to dimeric supercoiled plasmid DNA. Post-translationally, phosphorylated.

It localises to the host cell membrane. It is found in the host microsome membrane. The protein localises to the host endoplasmic reticulum membrane. Transports viral genome to neighboring plant cells directly through plasmosdesmata, without any budding. The movement protein allows efficient cell to cell propagation, by bypassing the host cell wall barrier. Begomovirus genome is shuttled out of nucleus by Nuclear shuttle protein (NSP) and the movement protein transports the DNA-NSP complex to cell plasmodesmata and facilitates further movement across the cell wall. This Manihot esculenta (Cassava) protein is Movement protein BC1.